We begin with the raw amino-acid sequence, 122 residues long: Large-conductance mechanosensitive channel (122 aa).

Helical transmembrane passes span 29 to 49 (FGKIVSSLVADVIMPIIGLIF) and 66 to 86 (GVFIQSIVDFLIVAGAIFLFI).

The protein belongs to the MscL family. Homopentamer.

It is found in the cell membrane. In terms of biological role, channel that opens in response to stretch forces in the membrane lipid bilayer. May participate in the regulation of osmotic pressure changes within the cell. The sequence is that of Large-conductance mechanosensitive channel from Macrococcus caseolyticus (strain JCSC5402) (Macrococcoides caseolyticum).